The chain runs to 394 residues: Probable fatty acid methyltransferase (394 aa).

S-adenosyl-L-methionine-binding positions include 128 to 129 (YS), 163 to 171 (LLDVGCGWG), and 189 to 194 (TLSKEQ). Cys-358 is an active-site residue.

The protein belongs to the CFA/CMAS family.

The sequence is that of Probable fatty acid methyltransferase from Pseudomonas putida (Arthrobacter siderocapsulatus).